The following is a 325-amino-acid chain: Homocysteine S-methyltransferase 2 (325 aa).

Residues 6 to 321 form the Hcy-binding domain; that stretch reads LKQFLADNPK…KDIQEISAAV (316 aa). Position 138 is a phosphothreonine (Thr138). Residues Cys239, Cys306, and Cys307 each contribute to the Zn(2+) site.

Requires Zn(2+) as cofactor.

Its subcellular location is the cytoplasm. The protein resides in the nucleus. The enzyme catalyses S-methyl-L-methionine + L-homocysteine = 2 L-methionine + H(+). Its function is as follows. Homocysteine S-methyltransferase involved in the conversion of S-adenosylmethionine (AdoMet) to methionine to control the methionine/AdoMet ratio. Also converts S-methylmethionine (SMM) to methionine. This chain is Homocysteine S-methyltransferase 2 (SAM4), found in Saccharomyces cerevisiae (strain ATCC 204508 / S288c) (Baker's yeast).